A 472-amino-acid polypeptide reads, in one-letter code: Ribosomal protein uS12 methylthiotransferase RimO (472 aa).

The region spanning Asn-33–Pro-143 is the MTTase N-terminal domain. Residues Cys-42, Cys-78, Cys-107, Cys-175, Cys-179, and Cys-182 each coordinate [4Fe-4S] cluster. The region spanning Leu-161–Glu-398 is the Radical SAM core domain. One can recognise a TRAM domain in the interval Ala-401–Asp-467.

The protein belongs to the methylthiotransferase family. RimO subfamily. The cofactor is [4Fe-4S] cluster.

The protein resides in the cytoplasm. It carries out the reaction L-aspartate(89)-[ribosomal protein uS12]-hydrogen + (sulfur carrier)-SH + AH2 + 2 S-adenosyl-L-methionine = 3-methylsulfanyl-L-aspartate(89)-[ribosomal protein uS12]-hydrogen + (sulfur carrier)-H + 5'-deoxyadenosine + L-methionine + A + S-adenosyl-L-homocysteine + 2 H(+). Functionally, catalyzes the methylthiolation of an aspartic acid residue of ribosomal protein uS12. The protein is Ribosomal protein uS12 methylthiotransferase RimO of Shewanella baltica (strain OS185).